The following is a 105-amino-acid chain: MIASKFGIGQQVRHSLLGYLGVVVDIDPVYSLSEPSPDELAVNDELRAAPWYHVVMEDDNGLPVHTYLAEAQLSSELQDEHPEQPSMDELAQTIRKQLQAPRLRN.

The interval 75 to 105 (SELQDEHPEQPSMDELAQTIRKQLQAPRLRN) is disordered.

Belongs to the HspQ family.

It localises to the cytoplasm. Functionally, involved in the degradation of certain denaturated proteins, including DnaA, during heat shock stress. The sequence is that of Heat shock protein HspQ from Escherichia coli O127:H6 (strain E2348/69 / EPEC).